Here is a 513-residue protein sequence, read N- to C-terminus: QWRF motif-containing protein 9 (513 aa).

3 stretches are compositionally biased toward polar residues: residues 1–26 (MTAA…PSES), 43–55 (GTSS…SPKR), and 65–78 (VTPS…PQST). Disordered regions lie at residues 1–89 (MTAA…RREV), 115–144 (GTLE…LSDQ), and 184–293 (VSNR…LRVR). A compositionally biased stretch (basic and acidic residues) spans 79–89 (PRRESLDRREV). Polar residues-rich tracts occupy residues 202-211 (ESVSSGSSNG) and 244-262 (VDSS…SPRG). The short motif at 334–337 (QWQF) is the QWRF motif element.

This sequence belongs to the QWRF family.

In Arabidopsis thaliana (Mouse-ear cress), this protein is QWRF motif-containing protein 9 (QWRF9).